Here is a 530-residue protein sequence, read N- to C-terminus: MSSLRPEEARKLATAASVSPLSNCQFCGVVISSIADEQKLEFTNKYKGSCTLLCSYDSQGVVLRVVSDDDRSHVLKEYMIAADTDAAQMGRRSYAVSLDADNLVLRFASEQDQQLFRKVVENVKHLRPKSVFSQRTEESSASQYFQFYGYLSQQQNMMQDYVRTSTYQRAILGNAVDFQDKIVLDVGAGSGILSFFAVQAGAAKVYAIEASNMAQYAQQLVESNNVQHKISVIPGKIEEIELPEKVDVIISEPMGYMLYNERMLETYLHARKWLKPQGKMYPTHGDLHIAPFSDESLYSEQYNKANFWYQSAFHGVDLTTLHKEGMKEYFRQPIVDTFDIRICMAKSVRHVCDFLNDKEDDLHLISIPLEFHILQTGICHGLAFWFDVEFSGSSQNVWLSTSPTAPLTHWYQVRCLLPMPIFIKQGQTLTGRVLLEANRRQSYDVTIDLHIEGTLISSSNTLDLKNPYFRYTGAPVQAPPGTSTQSPSEQYWTQVDTQGSRNSSSMLNGGISVNGIGEGMDITHGLMHPH.

Residues 141–450 (ASQYFQFYGY…QSYDVTIDLH (310 aa)) form the SAM-dependent MTase PRMT-type domain. S-adenosyl-L-methionine-binding residues include Gln154, Arg163, Gly187, Glu209, Glu238, and Thr266. An Asymmetric dimethylarginine; by autocatalysis modification is found at Arg501.

The protein belongs to the class I-like SAM-binding methyltransferase superfamily. Protein arginine N-methyltransferase family. In terms of assembly, homodimer. Interacts with EcR. The dimethylated protein is the major form. In terms of tissue distribution, present ubiquitously (at protein level). Expressed in the imaginal disks and in larval brains, and to a much lesser degree in the polytene larval tissue such as salivary glands.

It localises to the cytoplasm. The protein resides in the nucleus. It catalyses the reaction L-arginyl-[protein] + 2 S-adenosyl-L-methionine = N(omega),N(omega)-dimethyl-L-arginyl-[protein] + 2 S-adenosyl-L-homocysteine + 2 H(+). Its function is as follows. Methylates (mono- and asymmetric dimethylation) the guanidino nitrogens of arginyl residues in proteins. May methylate histone H3 at 'Arg-17' and activate transcription via chromatin remodeling. Coordinates ecdysone-mediated expression of cell death genes. This is Probable histone-arginine methyltransferase CARMER (Art4) from Drosophila melanogaster (Fruit fly).